We begin with the raw amino-acid sequence, 90 residues long: Probable Fe(2+)-trafficking protein (90 aa).

This sequence belongs to the Fe(2+)-trafficking protein family.

In terms of biological role, could be a mediator in iron transactions between iron acquisition and iron-requiring processes, such as synthesis and/or repair of Fe-S clusters in biosynthetic enzymes. This is Probable Fe(2+)-trafficking protein from Cupriavidus pinatubonensis (strain JMP 134 / LMG 1197) (Cupriavidus necator (strain JMP 134)).